Consider the following 587-residue polypeptide: Aspartate--tRNA(Asp/Asn) ligase (587 aa).

Glutamate 173 lines the L-aspartate pocket. An aspartate region spans residues 197–200; sequence QLFK. Arginine 219 lines the L-aspartate pocket. Residues 219–221 and glutamine 228 contribute to the ATP site; that span reads RDE. L-aspartate is bound at residue histidine 448. Glutamate 481 serves as a coordination point for ATP. Arginine 488 lines the L-aspartate pocket. An ATP-binding site is contributed by 533–536; sequence GLDR.

This sequence belongs to the class-II aminoacyl-tRNA synthetase family. Type 1 subfamily. Homodimer.

It is found in the cytoplasm. It catalyses the reaction tRNA(Asx) + L-aspartate + ATP = L-aspartyl-tRNA(Asx) + AMP + diphosphate. Its function is as follows. Aspartyl-tRNA synthetase with relaxed tRNA specificity since it is able to aspartylate not only its cognate tRNA(Asp) but also tRNA(Asn). Reaction proceeds in two steps: L-aspartate is first activated by ATP to form Asp-AMP and then transferred to the acceptor end of tRNA(Asp/Asn). The protein is Aspartate--tRNA(Asp/Asn) ligase of Alcanivorax borkumensis (strain ATCC 700651 / DSM 11573 / NCIMB 13689 / SK2).